We begin with the raw amino-acid sequence, 125 residues long: SOSS complex subunit C homolog B (125 aa).

Disordered stretches follow at residues 44-73 (PAPQ…RAAF) and 105-125 (PATP…NNPK).

This sequence belongs to the SOSS-C family.

This Drosophila willistoni (Fruit fly) protein is SOSS complex subunit C homolog B.